A 399-amino-acid polypeptide reads, in one-letter code: Beta sliding clamp (399 aa).

This sequence belongs to the beta sliding clamp family. As to quaternary structure, forms a ring-shaped head-to-tail homodimer around DNA which binds and tethers DNA polymerases and other proteins to the DNA. The DNA replisome complex has a single clamp-loading complex (3 tau and 1 each of delta, delta', psi and chi subunits) which binds 3 Pol III cores (1 core on the leading strand and 2 on the lagging strand) each with a beta sliding clamp dimer. Additional proteins in the replisome are other copies of gamma, psi and chi, Ssb, DNA helicase and RNA primase.

Its subcellular location is the cytoplasm. Its function is as follows. Confers DNA tethering and processivity to DNA polymerases and other proteins. Acts as a clamp, forming a ring around DNA (a reaction catalyzed by the clamp-loading complex) which diffuses in an ATP-independent manner freely and bidirectionally along dsDNA. Initially characterized for its ability to contact the catalytic subunit of DNA polymerase III (Pol III), a complex, multichain enzyme responsible for most of the replicative synthesis in bacteria; Pol III exhibits 3'-5' exonuclease proofreading activity. The beta chain is required for initiation of replication as well as for processivity of DNA replication. The polypeptide is Beta sliding clamp (dnaN) (Mycobacterium leprae (strain TN)).